Here is a 361-residue protein sequence, read N- to C-terminus: D-alanine--D-alanine ligase (361 aa).

The ATP-grasp domain maps to 134 to 344; the sequence is KLLLKSFNIP…FKDLVDNLIN (211 aa). Position 167–222 (167–222) interacts with ATP; it reads REALGYPVIVKPAVLGSSIGINVAYSENQIEFFIEEALKYDLTILIEKFIEAREIE. Positions 297, 311, and 313 each coordinate Mg(2+).

The protein belongs to the D-alanine--D-alanine ligase family. Mg(2+) serves as cofactor. Requires Mn(2+) as cofactor.

Its subcellular location is the cytoplasm. The enzyme catalyses 2 D-alanine + ATP = D-alanyl-D-alanine + ADP + phosphate + H(+). It participates in cell wall biogenesis; peptidoglycan biosynthesis. Its function is as follows. Cell wall formation. This Borrelia garinii subsp. bavariensis (strain ATCC BAA-2496 / DSM 23469 / PBi) (Borreliella bavariensis) protein is D-alanine--D-alanine ligase.